We begin with the raw amino-acid sequence, 152 residues long: Xanthine-guanine phosphoribosyltransferase (152 aa).

5-phospho-alpha-D-ribose 1-diphosphate is bound by residues 37 to 38, Arg-69, and 88 to 96; these read RG and DDLVDTGGT. Residue Arg-69 participates in GMP binding. Asp-89 provides a ligand contact to Mg(2+). The guanine site is built by Asp-92 and Ile-135. Xanthine-binding residues include Asp-92 and Ile-135. GMP is bound by residues 92 to 96 and 134 to 135; these read DTGGT and WI.

Belongs to the purine/pyrimidine phosphoribosyltransferase family. XGPT subfamily. In terms of assembly, homotetramer. It depends on Mg(2+) as a cofactor.

Its subcellular location is the cell inner membrane. The enzyme catalyses GMP + diphosphate = guanine + 5-phospho-alpha-D-ribose 1-diphosphate. The catalysed reaction is XMP + diphosphate = xanthine + 5-phospho-alpha-D-ribose 1-diphosphate. It catalyses the reaction IMP + diphosphate = hypoxanthine + 5-phospho-alpha-D-ribose 1-diphosphate. The protein operates within purine metabolism; GMP biosynthesis via salvage pathway; GMP from guanine: step 1/1. It functions in the pathway purine metabolism; XMP biosynthesis via salvage pathway; XMP from xanthine: step 1/1. Functionally, purine salvage pathway enzyme that catalyzes the transfer of the ribosyl-5-phosphate group from 5-phospho-alpha-D-ribose 1-diphosphate (PRPP) to the N9 position of the 6-oxopurines guanine and xanthine to form the corresponding ribonucleotides GMP (guanosine 5'-monophosphate) and XMP (xanthosine 5'-monophosphate), with the release of PPi. To a lesser extent, also acts on hypoxanthine. The protein is Xanthine-guanine phosphoribosyltransferase of Edwardsiella ictaluri (strain 93-146).